A 172-amino-acid chain; its full sequence is Small ribosomal subunit protein uS5 (172 aa).

One can recognise an S5 DRBM domain in the interval 17–80; that stretch reads LKEKMIAINR…EEARRNMTKV (64 aa).

The protein belongs to the universal ribosomal protein uS5 family. In terms of assembly, part of the 30S ribosomal subunit. Contacts proteins S4 and S8.

Its function is as follows. With S4 and S12 plays an important role in translational accuracy. In terms of biological role, located at the back of the 30S subunit body where it stabilizes the conformation of the head with respect to the body. This Polaromonas naphthalenivorans (strain CJ2) protein is Small ribosomal subunit protein uS5.